Reading from the N-terminus, the 1388-residue chain is Dicer-like protein 2 (1388 aa).

A Helicase ATP-binding domain is found at 23–203 (MLEASMKENI…LLTVESNLDA (181 aa)). ATP is bound at residue 36-43 (MDTGSGKT). A DEAH box motif is present at residues 144–147 (DEAH). The Helicase C-terminal domain occupies 371 to 537 (SLLNFLDSLD…DDERQLQSVS (167 aa)). Residues 564–658 (AMAHLHHFCA…LPLTKRPELK (95 aa)) form the Dicer dsRNA-binding fold domain. 2 consecutive RNase III domains span residues 919–1059 (ATRL…MDGG) and 1098–1281 (NERL…VDSG). Residues glutamate 1137, aspartate 1267, and glutamate 1270 each contribute to the Mg(2+) site.

It belongs to the helicase family. Dicer subfamily. It depends on Mg(2+) as a cofactor. Requires Mn(2+) as cofactor.

Its function is as follows. Dicer-like endonuclease involved in cleaving double-stranded RNA in the RNA interference (RNAi) pathway. Produces 21 to 25 bp dsRNAs (siRNAs) which target the selective destruction of homologous RNAs leading to sequence-specific suppression of gene expression, called post-transcriptional gene silencing (PTGS). Part of a broad host defense response against viral infection and transposons. The sequence is that of Dicer-like protein 2 (dcl2) from Neosartorya fischeri (strain ATCC 1020 / DSM 3700 / CBS 544.65 / FGSC A1164 / JCM 1740 / NRRL 181 / WB 181) (Aspergillus fischerianus).